Here is a 483-residue protein sequence, read N- to C-terminus: MTQATLKQLSQQLAAKQVSSVELASQYLDRIEALNPQLNAIVTVDREKTLAEARAADARLAAGDARALTGVPLVHKDLFCQQGWKTSCGSRMLDNFVSPYSAHVVEQCAAAGMVTLGRANMDEFAMGSSNENSFYGAVKNPWDLNAIPGGSSGGSAAAVAARLAPVATATDTGGSIRQPASHCGVTGIKPTYGVVSRYGMVAYASSLDQGGPIAQTAEDCALMLNVMAGFDARDSTSLERAKEDYARDLNQSLSGLKVGLPKEYFAAGLDADVARAVDNAVAELKKLGAEAVEISLPNTELSIPAYYVIAPAEASTNLSRYDGVRYGHRAKDYKDLVDMYEKTRAEGFGDEVKRRILVGSYVLSHGYYDAYYLKAQKIRRLIANDFKAAFEQCDVILGPVAPTAAFNIGEKSGDPVQMYLSDIYTLSVNLAGLPGMSVPAGFAANGRPIGLQIIGNYFAEARMLNVAHQFQQATDWHAKAPSL.

Catalysis depends on charge relay system residues K76 and S151. S175 functions as the Acyl-ester intermediate in the catalytic mechanism.

Belongs to the amidase family. GatA subfamily. In terms of assembly, heterotrimer of A, B and C subunits.

It carries out the reaction L-glutamyl-tRNA(Gln) + L-glutamine + ATP + H2O = L-glutaminyl-tRNA(Gln) + L-glutamate + ADP + phosphate + H(+). In terms of biological role, allows the formation of correctly charged Gln-tRNA(Gln) through the transamidation of misacylated Glu-tRNA(Gln) in organisms which lack glutaminyl-tRNA synthetase. The reaction takes place in the presence of glutamine and ATP through an activated gamma-phospho-Glu-tRNA(Gln). In Chromobacterium violaceum (strain ATCC 12472 / DSM 30191 / JCM 1249 / CCUG 213 / NBRC 12614 / NCIMB 9131 / NCTC 9757 / MK), this protein is Glutamyl-tRNA(Gln) amidotransferase subunit A.